The sequence spans 600 residues: Proline--tRNA ligase (600 aa).

This sequence belongs to the class-II aminoacyl-tRNA synthetase family. ProS type 1 subfamily. In terms of assembly, homodimer.

The protein resides in the cytoplasm. It carries out the reaction tRNA(Pro) + L-proline + ATP = L-prolyl-tRNA(Pro) + AMP + diphosphate. Functionally, catalyzes the attachment of proline to tRNA(Pro) in a two-step reaction: proline is first activated by ATP to form Pro-AMP and then transferred to the acceptor end of tRNA(Pro). As ProRS can inadvertently accommodate and process non-cognate amino acids such as alanine and cysteine, to avoid such errors it has two additional distinct editing activities against alanine. One activity is designated as 'pretransfer' editing and involves the tRNA(Pro)-independent hydrolysis of activated Ala-AMP. The other activity is designated 'posttransfer' editing and involves deacylation of mischarged Ala-tRNA(Pro). The misacylated Cys-tRNA(Pro) is not edited by ProRS. This is Proline--tRNA ligase from Prochlorococcus marinus (strain MIT 9515).